The primary structure comprises 343 residues: GTPase Obg (343 aa).

One can recognise an Obg domain in the interval 1–159; it reads MKFVDSASIF…LQLDMELKLM (159 aa). The interval 121 to 144 is disordered; that stretch reads GHGGRGNQHFATSTNQAPRRSEPG. Residues 129–138 show a composition bias toward polar residues; it reads HFATSTNQAP. The OBG-type G domain maps to 160 to 323; that stretch reads ADVGLVGFPN…LKDELWREVS (164 aa). GTP is bound by residues 166–173, 191–195, 213–216, 280–283, and 304–306; these read GFPNAGKS, FTTLV, DIPG, TKMD, and SSV. S173 and T193 together coordinate Mg(2+). The interval 322–343 is disordered; it reads VSMRDRPEESSDPEGEGDGGTP. The span at 331-343 shows a compositional bias: acidic residues; the sequence is SSDPEGEGDGGTP.

It belongs to the TRAFAC class OBG-HflX-like GTPase superfamily. OBG GTPase family. In terms of assembly, monomer. It depends on Mg(2+) as a cofactor.

It localises to the cytoplasm. Functionally, an essential GTPase which binds GTP, GDP and possibly (p)ppGpp with moderate affinity, with high nucleotide exchange rates and a fairly low GTP hydrolysis rate. Plays a role in control of the cell cycle, stress response, ribosome biogenesis and in those bacteria that undergo differentiation, in morphogenesis control. The protein is GTPase Obg of Chlorobium luteolum (strain DSM 273 / BCRC 81028 / 2530) (Pelodictyon luteolum).